A 316-amino-acid polypeptide reads, in one-letter code: 4-hydroxy-3-methylbut-2-enyl diphosphate reductase (316 aa).

Position 12 (Cys12) interacts with [4Fe-4S] cluster. 2 residues coordinate (2E)-4-hydroxy-3-methylbut-2-enyl diphosphate: His41 and His74. Dimethylallyl diphosphate contacts are provided by His41 and His74. Positions 41 and 74 each coordinate isopentenyl diphosphate. A [4Fe-4S] cluster-binding site is contributed by Cys96. Position 124 (His124) interacts with (2E)-4-hydroxy-3-methylbut-2-enyl diphosphate. His124 contacts dimethylallyl diphosphate. Residue His124 coordinates isopentenyl diphosphate. Glu126 serves as the catalytic Proton donor. Residue Thr168 coordinates (2E)-4-hydroxy-3-methylbut-2-enyl diphosphate. Cys198 contributes to the [4Fe-4S] cluster binding site. Residues Ser226, Ser227, Asn228, and Ser270 each contribute to the (2E)-4-hydroxy-3-methylbut-2-enyl diphosphate site. Residues Ser226, Ser227, Asn228, and Ser270 each contribute to the dimethylallyl diphosphate site. The isopentenyl diphosphate site is built by Ser226, Ser227, Asn228, and Ser270.

Belongs to the IspH family. The cofactor is [4Fe-4S] cluster.

The enzyme catalyses isopentenyl diphosphate + 2 oxidized [2Fe-2S]-[ferredoxin] + H2O = (2E)-4-hydroxy-3-methylbut-2-enyl diphosphate + 2 reduced [2Fe-2S]-[ferredoxin] + 2 H(+). It carries out the reaction dimethylallyl diphosphate + 2 oxidized [2Fe-2S]-[ferredoxin] + H2O = (2E)-4-hydroxy-3-methylbut-2-enyl diphosphate + 2 reduced [2Fe-2S]-[ferredoxin] + 2 H(+). The protein operates within isoprenoid biosynthesis; dimethylallyl diphosphate biosynthesis; dimethylallyl diphosphate from (2E)-4-hydroxy-3-methylbutenyl diphosphate: step 1/1. It participates in isoprenoid biosynthesis; isopentenyl diphosphate biosynthesis via DXP pathway; isopentenyl diphosphate from 1-deoxy-D-xylulose 5-phosphate: step 6/6. Its function is as follows. Catalyzes the conversion of 1-hydroxy-2-methyl-2-(E)-butenyl 4-diphosphate (HMBPP) into a mixture of isopentenyl diphosphate (IPP) and dimethylallyl diphosphate (DMAPP). Acts in the terminal step of the DOXP/MEP pathway for isoprenoid precursor biosynthesis. The polypeptide is 4-hydroxy-3-methylbut-2-enyl diphosphate reductase (Marinobacter nauticus (strain ATCC 700491 / DSM 11845 / VT8) (Marinobacter aquaeolei)).